A 418-amino-acid polypeptide reads, in one-letter code: Deubiquitinase and deneddylase Dub1 (418 aa).

Polar residues predominate over residues 1–10 (MLSPTNSISK). The disordered stretch occupies residues 1-23 (MLSPTNSISKTVPAPPQDSSKPV). The chain crosses the membrane as a helical span at residues 40–60 (TALAVLLVVVTLGLILLFYSF). The tract at residues 75–145 (STKEHPTISI…LPPKAPKPVK (71 aa)) is disordered. Residues 86–141 (EPLPSPPLAVPRPSTPPPPVISRPSTPPAPTPAISPPSTPSAPKPSTPPPLPPKAP) are compositionally biased toward pro residues. Residues histidine 288, aspartate 305, and cysteine 358 contribute to the active site.

It belongs to the peptidase C48 family.

Its subcellular location is the secreted. The protein resides in the host cell. It localises to the membrane. In terms of biological role, effector proteins function to alter host cell physiology and promote bacterial survival in host tissues. This protease possesses deubiquitinating and deneddylating activities. In Chlamydia trachomatis serovar A (strain ATCC VR-571B / DSM 19440 / HAR-13), this protein is Deubiquitinase and deneddylase Dub1 (cdu1).